The following is a 294-amino-acid chain: MLENLSTEHRNEKTMNLDEMSIKEVLQSMNEEDRTVALAVEKEIEQIEKVVQTVIKSFEEEGRLIYIGAGTSGRLGILDAVECPPTFGTDDKMVQGFIAGGLKAFTKAVEGAEDREELAEEDLKSIGLNEKDTVIGIAASGRTPYVIGGLKYAQSVGASTASISCNKNAEISKYAKLNVEVETGAEILTGSTRLKAGTAQKLVLNMISTASMIGVGKVYKNLMVDVQSTNEKLVERSKRIIVEATGASYEVATEYYEKAERNVKAAIVMVLLQCEYGEALEKLKYAKGFVKKAL.

The region spanning Val-54–Lys-217 is the SIS domain. The Proton donor role is filled by Glu-82. The active site involves Glu-113.

The protein belongs to the GCKR-like family. MurNAc-6-P etherase subfamily. As to quaternary structure, homodimer.

The enzyme catalyses N-acetyl-D-muramate 6-phosphate + H2O = N-acetyl-D-glucosamine 6-phosphate + (R)-lactate. It participates in amino-sugar metabolism; N-acetylmuramate degradation. In terms of biological role, specifically catalyzes the cleavage of the D-lactyl ether substituent of MurNAc 6-phosphate, producing GlcNAc 6-phosphate and D-lactate. In Bacillus cereus (strain B4264), this protein is N-acetylmuramic acid 6-phosphate etherase.